The following is a 417-amino-acid chain: NADH-quinone oxidoreductase subunit D (417 aa).

Belongs to the complex I 49 kDa subunit family. NDH-1 is composed of 14 different subunits. Subunits NuoB, C, D, E, F, and G constitute the peripheral sector of the complex.

The protein localises to the cell inner membrane. The enzyme catalyses a quinone + NADH + 5 H(+)(in) = a quinol + NAD(+) + 4 H(+)(out). NDH-1 shuttles electrons from NADH, via FMN and iron-sulfur (Fe-S) centers, to quinones in the respiratory chain. The immediate electron acceptor for the enzyme in this species is believed to be ubiquinone. Couples the redox reaction to proton translocation (for every two electrons transferred, four hydrogen ions are translocated across the cytoplasmic membrane), and thus conserves the redox energy in a proton gradient. This chain is NADH-quinone oxidoreductase subunit D, found in Halorhodospira halophila (strain DSM 244 / SL1) (Ectothiorhodospira halophila (strain DSM 244 / SL1)).